A 551-amino-acid polypeptide reads, in one-letter code: Cytochrome bc1 complex cytochrome b subunit (551 aa).

Residues 44 to 64 (FLLGEIALYSFIVLLLTGVYL) traverse the membrane as a helical segment. Heme contacts are provided by His113 and His127. 3 helical membrane passes run 117 to 137 (ALMFTAAIMVHLARIFFTGAF), 145 to 165 (WVIGSLLLILAMFEGYFGYSM), and 188 to 208 (VIGTWLHWALFGGDFPGTILI). Residues His215 and His230 each contribute to the heme site. 5 consecutive transmembrane segments (helical) span residues 216–236 (ILLIPGVILALIGLHLALVWF), 265–285 (SGAFFAAIVGVLGLMGGFLQI), 334–354 (PVWVAVIMALVFVLLITYPFL), 380–400 (IGAMAITFYMVLTLAAMNDII), and 417–437 (IGMVILPLLVYFITYRWCIGL). The disordered stretch occupies residues 532-551 (ALREHQDSIASSPNGERGKH).

Belongs to the cytochrome b family. The cytochrome bc1 complex is composed of a cytochrome b (QcrB), the Rieske iron-sulfur protein (QcrA) and a diheme cytochrome c (QcrC) subunit. Heme is required as a cofactor.

It localises to the cell membrane. It catalyses the reaction a quinol + 2 Fe(III)-[cytochrome c](out) = a quinone + 2 Fe(II)-[cytochrome c](out) + 2 H(+)(out). Cytochrome b subunit of the cytochrome bc1 complex, an essential component of the respiratory electron transport chain required for ATP synthesis. The bc1 complex catalyzes the oxidation of ubiquinol and the reduction of cytochrome c in the respiratory chain. The bc1 complex operates through a Q-cycle mechanism that couples electron transfer to generation of the proton gradient that drives ATP synthesis. The cytochrome b subunit contains two ubiquinol reactive sites: the oxidation (QP) site and the reduction (QN) site. The sequence is that of Cytochrome bc1 complex cytochrome b subunit (qcrB) from Mycobacterium leprae (strain TN).